We begin with the raw amino-acid sequence, 457 residues long: F-box/LRR-repeat protein At2g42730 (457 aa).

The region spanning 4–50 is the F-box domain; that stretch reads KDVISRLPDEVLGRILSLISTKEAVSTSVLSKRWKNMFVLVSNLDID. LRR repeat units lie at residues 265 to 288, 292 to 315, and 318 to 343; these read MDET…MRNL, IRNV…CKEM, and FDSL…LIKN.

In Arabidopsis thaliana (Mouse-ear cress), this protein is F-box/LRR-repeat protein At2g42730.